A 159-amino-acid chain; its full sequence is Probable metallophosphoesterase MPN_126 (159 aa).

The Mn(2+) site is built by D9, H11, D34, N53, H75, H107, and H109.

It belongs to the metallophosphoesterase superfamily. YfcE family. Requires Mn(2+) as cofactor.

This chain is Probable metallophosphoesterase MPN_126, found in Mycoplasma pneumoniae (strain ATCC 29342 / M129 / Subtype 1) (Mycoplasmoides pneumoniae).